The sequence spans 249 residues: Transcriptional activator protein EsaR (249 aa).

The HTH luxR-type domain occupies 174-239; it reads QSADKTIFSS…QAIRLGVELD (66 aa). Positions 198-217 form a DNA-binding region, H-T-H motif; the sequence is YAEIAAITGISVSTVKFHIK.

This sequence belongs to the autoinducer-regulated transcriptional regulatory protein family.

Its function is as follows. Functions as a potential OhlL-responsive transcriptional regulator. This chain is Transcriptional activator protein EsaR (esaR), found in Pantoea stewartii subsp. stewartii (Erwinia stewartii).